Here is a 106-residue protein sequence, read N- to C-terminus: MNIENKLDVDAVLSEIIEDHDAFSENYDFDFSDYLKPIEIEDWVQDGKCQYRQCVYFSPKHNVHVAVNESRSGSYHSDWYYAVPTVELVELRERVVTQTVREWITL.

This is an uncharacterized protein from Enterobacteria phage T4 (Bacteriophage T4).